We begin with the raw amino-acid sequence, 799 residues long: Sodium- and chloride-dependent glycine transporter 2 (799 aa).

The disordered stretch occupies residues 1–64 (MDCSAPKEMN…RSASTGAQTF (64 aa)). Over 1-201 (MDCSAPKEMN…ARGNWSSKLD (201 aa)) the chain is Cytoplasmic. The segment covering 40 to 57 (PAAAPAAAVQPPRVPRSA) has biased composition (low complexity). Ser-58 carries the post-translational modification Phosphoserine. Thr-59 carries the post-translational modification Phosphothreonine. Ser-86 is modified (phosphoserine). Helical transmembrane passes span 202–222 (FILSMVGYAVGLGNVWRFPYL), 230–249 (AFLIPYLMMLALAGLPIFFL), and 273–293 (GCGIAMLIISVLIAIYYNVII). The Na(+) site is built by Gly-208, Ala-210, Val-211, and Asn-215. The Extracellular portion of the chain corresponds to 294–395 (CYTLFYLFAS…AGIEYPGEIR (102 aa)). The cysteines at positions 313 and 322 are disulfide-linked. Asn-345, Asn-355, Asn-360, and Asn-366 each carry an N-linked (GlcNAc...) asparagine glycan. The next 5 membrane-spanning stretches (helical) occupy residues 396-414 (WPLAFCLFLAWVIVYASLA), 423-440 (VVYFTATFPYVVLVILLI), 476-493 (IFFSLSAAWGGLITLSSY), 505-526 (LIVTCTNSATSIFAGFVIFSVI), and 559-578 (LPLSPFWAIIFFLMLLTLGL). Residues Ser-479, Asn-511, Leu-576, and Asp-579 each coordinate Na(+). The next 4 membrane-spanning stretches (helical) occupy residues 606–624 (VFTLGCCICFFIMGFPMIT), 640–660 (SYALVIIAIFELVGISYVYGL), 681–700 (VCWAFVTPTILTFILCFSFY), and 719–737 (LGWLMLACSVIWIPIMFVI). Topologically, residues 738–799 (KMYLAPGRFI…VKDLELGTQC (62 aa)) are cytoplasmic.

The protein belongs to the sodium:neurotransmitter symporter (SNF) (TC 2.A.22) family. SLC6A5 subfamily. Post-translationally, N-glycosylated. As to expression, specifically expressed in spinal cord, brain stem, and to a lesser extent in the cerebellum.

It is found in the cell membrane. It catalyses the reaction glycine(out) + chloride(out) + 3 Na(+)(out) = glycine(in) + chloride(in) + 3 Na(+)(in). Its function is as follows. Sodium- and chloride-dependent glycine transporter. Terminates the action of glycine by its high affinity sodium-dependent reuptake into presynaptic terminals. May be responsible for the termination of neurotransmission at strychnine-sensitive glycinergic synapses. The protein is Sodium- and chloride-dependent glycine transporter 2 (Slc6a5) of Rattus norvegicus (Rat).